Consider the following 421-residue polypeptide: Bone morphogenetic protein 10 (421 aa).

Positions 1 to 21 (MGSLVLPLSAVFCLVAHSASG) are cleaved as a signal peptide. Residues 22–313 (SPIMGLEQSP…IDDSSARIRR (292 aa)) constitute a propeptide that is removed on maturation. 2 N-linked (GlcNAc...) asparagine glycosylation sites follow: Asn67 and Asn131. Intrachain disulfides connect Cys320–Cys386, Cys349–Cys418, and Cys353–Cys420.

It belongs to the TGF-beta family. As to quaternary structure, homodimer; disulfide-linked. Interacts with FBN1 (via N-terminal domain) and FBN2. Interacts with ENG. In the embryo, expressed exclusively in the ventricular trabecular myocardium of the developing heart from 9.0 dpc-13.5 dpc. By 16.5 dpc-18.5 dpc, only detectable in atria. Highly expressed in the adult heart where it is found in the right atrium but not in the left atrium. Lower levels in adult liver and lung.

Its subcellular location is the secreted. Required for maintaining the proliferative activity of embryonic cardiomyocytes by preventing premature activation of the negative cell cycle regulator CDKN1C/p57KIP and maintaining the required expression levels of cardiogenic factors such as MEF2C and NKX2-5. Acts as a ligand for ACVRL1/ALK1, BMPR1A/ALK3 and BMPR1B/ALK6, leading to activation of SMAD1, SMAD5 and SMAD8 transcription factors. Inhibits endothelial cell migration and growth. May reduce cell migration and cell matrix adhesion in breast cancer cell lines. The protein is Bone morphogenetic protein 10 (Bmp10) of Mus musculus (Mouse).